Consider the following 183-residue polypeptide: Helofensin-2 (183 aa).

The N-terminal stretch at Met-1 to Gly-26 is a signal peptide. One copy of the C(6)C(4)C(9)C(6)CC 1; approximate repeat lies at Ala-27–Ala-64. Residues Arg-65–Gln-101 form a C(6)C(4)C(9)C(6)CC 2; approximate repeat. A C(6)C(4)C(9)C(6)CC 3; approximate repeat occupies Arg-102–Lys-139. The stretch at Arg-140 to Lys-177 is one C(6)C(4)C(9)C(6)CC 4; approximate repeat.

This sequence belongs to the beta-defensin family. Helofensin subfamily. As to expression, expressed by the mandibular venom gland.

The protein resides in the secreted. In terms of biological role, lethal toxin which possesses an inhibitory effect on direct electrical stimulation of the isolated hemi-diaphragm of mice. Neither hemorrhagic nor hemolytic activities are detected. Phospholipase A2 activity, proteolytic activity and arginine esterolytic activity are absent. The sequence is that of Helofensin-2 from Heloderma suspectum cinctum (Banded Gila monster).